The primary structure comprises 219 residues: Cytidylate kinase (219 aa).

An ATP-binding site is contributed by 15 to 23 (GPAASGKGT).

This sequence belongs to the cytidylate kinase family. Type 1 subfamily.

It is found in the cytoplasm. The enzyme catalyses CMP + ATP = CDP + ADP. It carries out the reaction dCMP + ATP = dCDP + ADP. In Brucella melitensis biotype 2 (strain ATCC 23457), this protein is Cytidylate kinase.